The following is a 601-amino-acid chain: Probable HECT-type ubiquitin ligase-interacting protein creD (601 aa).

2 disordered regions span residues 374–397 and 455–489; these read EVDPSGYRTPGPGSGPGTPFGTLS and SADYFGPSSGSNSHSPASPELSRRPSDEGYHDHDH. The span at 461-473 shows a compositional bias: low complexity; that stretch reads PSSGSNSHSPASP. Positions 475-489 are enriched in basic and acidic residues; that stretch reads LSRRPSDEGYHDHDH.

The protein belongs to the arrestin family. Interacts with hulA.

In terms of biological role, component of the regulatory network controlling carbon source utilization through ubiquitination and deubiquitination involving creA, creB, creC, creD and acrB. May be involved in signaling by recognizing appropriately phosphorylated substrates via its arrestin domains and then recruit a HECT-type ubiquitin ligase such as hulA, leading to ubiquitination of the substrate, providing a link between ubiquitination and phosphorylation in protein regulation and stability. This is Probable HECT-type ubiquitin ligase-interacting protein creD (creD) from Neosartorya fischeri (strain ATCC 1020 / DSM 3700 / CBS 544.65 / FGSC A1164 / JCM 1740 / NRRL 181 / WB 181) (Aspergillus fischerianus).